The following is a 600-amino-acid chain: UvrABC system protein C (600 aa).

In terms of domain architecture, GIY-YIG spans 15–100; sequence NSAGVYQYFN…IKQLHPKYNI (86 aa). Positions 203-238 constitute a UVR domain; that stretch reads SILIKNLEKQMLVLAQNENYEEAAKVRDQIVTIKDL.

This sequence belongs to the UvrC family. As to quaternary structure, interacts with UvrB in an incision complex.

It is found in the cytoplasm. Its function is as follows. The UvrABC repair system catalyzes the recognition and processing of DNA lesions. UvrC both incises the 5' and 3' sides of the lesion. The N-terminal half is responsible for the 3' incision and the C-terminal half is responsible for the 5' incision. This Campylobacter jejuni subsp. jejuni serotype O:23/36 (strain 81-176) protein is UvrABC system protein C.